The sequence spans 157 residues: Transcriptional repressor NrdR (157 aa).

Residues 3–34 (CPFCRHPDSRVVDSRTSDDGLSIRRRRQCPEC) fold into a zinc finger. Residues 46 to 136 (LSVIKRNGVV…VYQGFDSLDD (91 aa)) enclose the ATP-cone domain.

The protein belongs to the NrdR family. It depends on Zn(2+) as a cofactor.

In terms of biological role, negatively regulates transcription of bacterial ribonucleotide reductase nrd genes and operons by binding to NrdR-boxes. This is Transcriptional repressor NrdR from Clavibacter michiganensis subsp. michiganensis (strain NCPPB 382).